The sequence spans 317 residues: Methionyl-tRNA formyltransferase (317 aa).

A (6S)-5,6,7,8-tetrahydrofolate-binding site is contributed by 112 to 115; it reads SLLP.

It belongs to the Fmt family.

The enzyme catalyses L-methionyl-tRNA(fMet) + (6R)-10-formyltetrahydrofolate = N-formyl-L-methionyl-tRNA(fMet) + (6S)-5,6,7,8-tetrahydrofolate + H(+). Functionally, attaches a formyl group to the free amino group of methionyl-tRNA(fMet). The formyl group appears to play a dual role in the initiator identity of N-formylmethionyl-tRNA by promoting its recognition by IF2 and preventing the misappropriation of this tRNA by the elongation apparatus. In Geobacter sulfurreducens (strain ATCC 51573 / DSM 12127 / PCA), this protein is Methionyl-tRNA formyltransferase.